The chain runs to 354 residues: Heat-inducible transcription repressor HrcA (354 aa).

This sequence belongs to the HrcA family.

Negative regulator of class I heat shock genes (grpE-dnaK-dnaJ and groELS operons). Prevents heat-shock induction of these operons. This chain is Heat-inducible transcription repressor HrcA, found in Herpetosiphon aurantiacus (strain ATCC 23779 / DSM 785 / 114-95).